Reading from the N-terminus, the 155-residue chain is uncharacterized protein (155 aa).

A disordered region spans residues 56–79 (GEKRPTHRRPYRRTKPYPKRPSML). The span at 60–73 (PTHRRPYRRTKPYP) shows a compositional bias: basic residues.

This is an uncharacterized protein from Sinorhizobium fredii (strain NBRC 101917 / NGR234).